Consider the following 303-residue polypeptide: Succinate--CoA ligase [ADP-forming] subunit alpha (303 aa).

CoA is bound by residues 20-23, K46, and 108-110; these read TGSE and ITE. Y173 lines the substrate pocket. H259 serves as the catalytic Tele-phosphohistidine intermediate.

This sequence belongs to the succinate/malate CoA ligase alpha subunit family. In terms of assembly, heterotetramer of two alpha and two beta subunits.

The catalysed reaction is succinate + ATP + CoA = succinyl-CoA + ADP + phosphate. It catalyses the reaction GTP + succinate + CoA = succinyl-CoA + GDP + phosphate. It functions in the pathway carbohydrate metabolism; tricarboxylic acid cycle; succinate from succinyl-CoA (ligase route): step 1/1. Its function is as follows. Succinyl-CoA synthetase functions in the citric acid cycle (TCA), coupling the hydrolysis of succinyl-CoA to the synthesis of either ATP or GTP and thus represents the only step of substrate-level phosphorylation in the TCA. The alpha subunit of the enzyme binds the substrates coenzyme A and phosphate, while succinate binding and nucleotide specificity is provided by the beta subunit. This Mycobacterium tuberculosis (strain CDC 1551 / Oshkosh) protein is Succinate--CoA ligase [ADP-forming] subunit alpha.